We begin with the raw amino-acid sequence, 470 residues long: Glutamate--tRNA ligase (470 aa).

The 'HIGH' region motif lies at 9–19; it reads PSPTGFLHVGG. The short motif at 236-240 is the 'KMSKS' region element; sequence RLSKR. Position 239 (lysine 239) interacts with ATP.

This sequence belongs to the class-I aminoacyl-tRNA synthetase family. Glutamate--tRNA ligase type 1 subfamily. Monomer.

It localises to the cytoplasm. The enzyme catalyses tRNA(Glu) + L-glutamate + ATP = L-glutamyl-tRNA(Glu) + AMP + diphosphate. Functionally, catalyzes the attachment of glutamate to tRNA(Glu) in a two-step reaction: glutamate is first activated by ATP to form Glu-AMP and then transferred to the acceptor end of tRNA(Glu). The sequence is that of Glutamate--tRNA ligase from Legionella pneumophila (strain Paris).